Here is a 161-residue protein sequence, read N- to C-terminus: MLHEAETWVAVAFVLMVALFIYFGAHRMIGEALDRRSARIRKELDDARQLKEEAQKLVAEYRSRRESAEREAQEIVAAAQADAERIAQEAKAKMEDFVARRTKAAESKIAQAETQAVADVRAAAAEAAAAAAANVLSQTVKGSIADNLIEKSIRELGGKLN.

The helical transmembrane segment at 5 to 25 (AETWVAVAFVLMVALFIYFGA) threads the bilayer.

The protein belongs to the ATPase B chain family. In terms of assembly, F-type ATPases have 2 components, F(1) - the catalytic core - and F(0) - the membrane proton channel. F(1) has five subunits: alpha(3), beta(3), gamma(1), delta(1), epsilon(1). F(0) has three main subunits: a(1), b(2) and c(10-14). The alpha and beta chains form an alternating ring which encloses part of the gamma chain. F(1) is attached to F(0) by a central stalk formed by the gamma and epsilon chains, while a peripheral stalk is formed by the delta and b chains.

Its subcellular location is the cell inner membrane. Functionally, f(1)F(0) ATP synthase produces ATP from ADP in the presence of a proton or sodium gradient. F-type ATPases consist of two structural domains, F(1) containing the extramembraneous catalytic core and F(0) containing the membrane proton channel, linked together by a central stalk and a peripheral stalk. During catalysis, ATP synthesis in the catalytic domain of F(1) is coupled via a rotary mechanism of the central stalk subunits to proton translocation. Component of the F(0) channel, it forms part of the peripheral stalk, linking F(1) to F(0). The sequence is that of ATP synthase subunit b 1 from Afipia carboxidovorans (strain ATCC 49405 / DSM 1227 / KCTC 32145 / OM5) (Oligotropha carboxidovorans).